Here is a 385-residue protein sequence, read N- to C-terminus: Protein pelota homolog (385 aa).

Residue Lys-162 forms a Glycyl lysine isopeptide (Lys-Gly) (interchain with G-Cter in SUMO2) linkage. A phosphoserine mark is found at Ser-374, Ser-380, Ser-381, and Ser-382.

Belongs to the eukaryotic release factor 1 family. Pelota subfamily. As to quaternary structure, component of the Pelota-HBS1L complex, also named Dom34-Hbs1 complex, composed of PELO and HBS1L. Interacts with PINK1. Interacts with ABCE1. Interacts with CNOT4. A divalent metal cation is required as a cofactor.

Its subcellular location is the cytoplasm. Its function is as follows. Component of the Pelota-HBS1L complex, a complex that recognizes stalled ribosomes and triggers the No-Go Decay (NGD) pathway. In the Pelota-HBS1L complex, PELO recognizes ribosomes stalled at the 3' end of an mRNA and engages stalled ribosomes by destabilizing mRNA in the mRNA channel. Following mRNA extraction from stalled ribosomes by the SKI complex, the Pelota-HBS1L complex promotes recruitment of ABCE1, which drives the disassembly of stalled ribosomes, followed by degradation of damaged mRNAs as part of the NGD pathway. As part of the PINK1-regulated signaling, upon mitochondrial damage is recruited to the ribosome/mRNA-ribonucleoprotein complex associated to mitochondrial outer membrane thereby enabling the recruitment of autophagy receptors and induction of mitophagy. This Bos taurus (Bovine) protein is Protein pelota homolog (PELO).